A 348-amino-acid polypeptide reads, in one-letter code: Rhodopsin (348 aa).

The Extracellular segment spans residues 1–33 (TEGPYFYVPMVNTTGIVRSPYEYPQYYLVNPAA). N-linked (GlcNAc...) asparagine glycosylation occurs at Asn12. The helical transmembrane segment at 34 to 58 (FAILGAYMFFLIIVGFPVNFMTLYV) threads the bilayer. The Cytoplasmic segment spans residues 59–70 (TLEHKKLRTPLN). The helical transmembrane segment at 71–93 (YILLNLAVADLFMVIGGFTTTMY) threads the bilayer. Over 94–107 (TSMHGYFVLGRLGC) the chain is Extracellular. Cys107 and Cys184 are disulfide-bonded. A helical membrane pass occupies residues 108 to 130 (NLEGFFATLGGMISLWSLAVLAI). Residues 131-133 (ERW) carry the 'Ionic lock' involved in activated form stabilization motif. The Cytoplasmic segment spans residues 131–149 (ERWVVVCKPISNFRFGENH). Residues 150 to 170 (AIMGVSLTWGMALACTVPPLV) form a helical membrane-spanning segment. Residues 171–199 (GWSRYIPEGMQCSCGIDYYTRAEGFNNET) lie on the Extracellular side of the membrane. Asn197 carries N-linked (GlcNAc...) asparagine glycosylation. Residues 200-221 (FVLYMFCCHFTVPLTIIFFCYG) form a helical membrane-spanning segment. The Cytoplasmic segment spans residues 222 to 249 (RLLCAVKEAAAAQQESETTQRAEREVTR). A helical membrane pass occupies residues 250–271 (MVVIMVIGFLVCWLPYASVAWF). At 272-283 (VFTHQGSEFGPL) the chain is on the extracellular side. A helical membrane pass occupies residues 284–305 (FMTIPAFFAKSSAIYNPMIYIC). Lys293 is subject to N6-(retinylidene)lysine. Over 306–348 (MNKQFRHCMITTLFCGKNPFEGEEEGASSTKTEASSASSVSPA) the chain is Cytoplasmic. A lipid anchor (S-palmitoyl cysteine) is attached at Cys320. Residues 327–348 (GEEEGASSTKTEASSASSVSPA) are disordered. Over residues 332-348 (ASSTKTEASSASSVSPA) the composition is skewed to low complexity.

The protein belongs to the G-protein coupled receptor 1 family. Opsin subfamily. In terms of processing, phosphorylated on some or all of the serine and threonine residues present in the C-terminal region. Post-translationally, contains one covalently linked retinal chromophore.

Its subcellular location is the membrane. The protein localises to the cell projection. It localises to the cilium. It is found in the photoreceptor outer segment. Its function is as follows. Photoreceptor required for image-forming vision at low light intensity. While most salt water fish species use retinal as chromophore, most freshwater fish use 3-dehydroretinal, or a mixture of retinal and 3-dehydroretinal. Light-induced isomerization of 11-cis to all-trans retinal triggers a conformational change that activates signaling via G-proteins. Subsequent receptor phosphorylation mediates displacement of the bound G-protein alpha subunit by arrestin and terminates signaling. The polypeptide is Rhodopsin (rho) (Sargocentron xantherythrum (Hawaiian squirrelfish)).